The sequence spans 251 residues: Probable transcriptional regulatory protein jk1057 (251 aa).

The interval 1 to 22 is disordered; the sequence is MAGHSKWATTKHKKAANDAKRG.

This sequence belongs to the TACO1 family.

It is found in the cytoplasm. The sequence is that of Probable transcriptional regulatory protein jk1057 from Corynebacterium jeikeium (strain K411).